Here is a 682-residue protein sequence, read N- to C-terminus: Probable glycosyl transferase Gly (682 aa).

UDP is bound by residues 21–26 (CASFSD) and 112–113 (DC). Mn(2+)-binding residues include Asp112, Asp114, and His230. 230 to 236 (HYLPERK) contacts UDP.

Belongs to the glycosyltransferase 8 family. In terms of assembly, part of the accessory SecA2/SecY2 protein translocation apparatus required to export cell wall protein GspB.

Its function is as follows. Part of the accessory SecA2/SecY2 system specifically required to export GspB, a serine-rich repeat cell wall protein encoded upstream in the same operon. In Streptococcus gordonii, this protein is Probable glycosyl transferase Gly (gly).